Reading from the N-terminus, the 70-residue chain is Probable U6 snRNA-associated Sm-like protein (70 aa).

The Sm domain maps to 3 to 70 (DPFCFLKMYL…ILFVGPRLLL (68 aa)).

The protein belongs to the snRNP Sm proteins family.

It localises to the nucleus. Functionally, binds specifically to the 3'-terminal U-tract of U6 snRNA. The polypeptide is Probable U6 snRNA-associated Sm-like protein (Encephalitozoon cuniculi (strain GB-M1) (Microsporidian parasite)).